Consider the following 464-residue polypeptide: MTKTRQETDTMGKMDVDASRYWGAQTERSIHNFPIGRDTFVWGRPVIRALGILKKGAAQANAELGELPADVADLIVKAADEVIAGKLDEHFPLVVFQTGSGTQSNMNANEVISNRAIELAGGEMGSKKPVHPNDHVNRGQSSNDTFPTAMHIAVVLELNERLYGAVGKLRDTLHAKAEQYKDLVKVGRTHLQDATPITLGQEIGGWVAQLDYALSEVKHAGEGLLDLAIGGTAVGTGLNAHPKFGDLAAKKYEEETGYHFRSAENKFAALSAHDALVQTSAALRTLAGALMKMANDVRWLASGPRNGIGEITIPENEPGSSIMPGKVNPTQSEAMTMVATRVFGNDATVAFAGSQGNFQLNVFKPVMVHAVLESIRLISDACLAFNDHCAVGIQPNEAKIKENLDKNLMQVTALNRHIGYDKAAAIAKKAHKEGTSLKDAALALGYVTEDEFAQWVVPLGMTHN.

Substrate contacts are provided by residues 100–102 (SGT), 131–134 (HPND), 141–143 (SSN), and T189. Residue H190 is the Proton donor/acceptor of the active site. S320 is an active-site residue. Residues S321 and 326–328 (KVN) contribute to the substrate site.

Belongs to the class-II fumarase/aspartase family. Fumarase subfamily. As to quaternary structure, homotetramer.

It is found in the cytoplasm. The enzyme catalyses (S)-malate = fumarate + H2O. It participates in carbohydrate metabolism; tricarboxylic acid cycle; (S)-malate from fumarate: step 1/1. Its function is as follows. Involved in the TCA cycle. Catalyzes the stereospecific interconversion of fumarate to L-malate. The sequence is that of Fumarate hydratase class II from Deinococcus radiodurans (strain ATCC 13939 / DSM 20539 / JCM 16871 / CCUG 27074 / LMG 4051 / NBRC 15346 / NCIMB 9279 / VKM B-1422 / R1).